Here is a 235-residue protein sequence, read N- to C-terminus: MVFNVNILTIFPEMFPGTLGYSVIGKALNKGIWNLNVIDIRSFATDKHKTVDDKPYGGGPGMIMKADVIGSAIDNVLSTNKETKLIYMSPSGVKLNQDISGQLAHFSNITILCGRFEGIDRRVLDFYDFYEISIGDYILSGGEVASMVLIETCVRLIPGVVSNVDSIRDESFTASYGLEYSQYTRPASWRGLEVPSVLVSGNHKKINLWKTQQSYRITKQRRPELTNTADGDIYE.

S-adenosyl-L-methionine is bound by residues glycine 114 and 134–139 (IGDYIL).

It belongs to the RNA methyltransferase TrmD family. As to quaternary structure, homodimer.

Its subcellular location is the cytoplasm. The enzyme catalyses guanosine(37) in tRNA + S-adenosyl-L-methionine = N(1)-methylguanosine(37) in tRNA + S-adenosyl-L-homocysteine + H(+). Its function is as follows. Specifically methylates guanosine-37 in various tRNAs. The protein is tRNA (guanine-N(1)-)-methyltransferase of Ehrlichia ruminantium (strain Gardel).